The sequence spans 376 residues: Succinyl-diaminopimelate desuccinylase (376 aa).

H67 is a Zn(2+) binding site. Residue D69 is part of the active site. D100 is a Zn(2+) binding site. The active-site Proton acceptor is the E134. Zn(2+)-binding residues include E135, E163, and H349.

Belongs to the peptidase M20A family. DapE subfamily. Homodimer. Requires Zn(2+) as cofactor. The cofactor is Co(2+).

The enzyme catalyses N-succinyl-(2S,6S)-2,6-diaminopimelate + H2O = (2S,6S)-2,6-diaminopimelate + succinate. The protein operates within amino-acid biosynthesis; L-lysine biosynthesis via DAP pathway; LL-2,6-diaminopimelate from (S)-tetrahydrodipicolinate (succinylase route): step 3/3. Catalyzes the hydrolysis of N-succinyl-L,L-diaminopimelic acid (SDAP), forming succinate and LL-2,6-diaminopimelate (DAP), an intermediate involved in the bacterial biosynthesis of lysine and meso-diaminopimelic acid, an essential component of bacterial cell walls. The protein is Succinyl-diaminopimelate desuccinylase of Xanthomonas campestris pv. campestris (strain B100).